A 182-amino-acid chain; its full sequence is MDKFDANRRKLLALGGVALGAAILPTPAFATLSTPRPRILTLNNLHTGESIKAEFFDGRGYIQEELAKLNHFFRDYRANKIKSIDPGLFDQLYRLQGLLGTRKPVQLISGYRSIDTNNELRARSRGVAKKSYHTKGQAMDFHIEGIALSNIRKAALSMRAGGVGYYPRSNFVHIDTGPARHW.

A signal peptide (tat-type signal) is located at residues 1 to 30; that stretch reads MDKFDANRRKLLALGGVALGAAILPTPAFA. His-133, Asp-140, and His-173 together coordinate Zn(2+).

This sequence belongs to the peptidase M15 family. Zn(2+) is required as a cofactor. In terms of processing, predicted to be exported by the Tat system. The position of the signal peptide cleavage has not been experimentally proven.

The protein operates within cell wall biogenesis; cell wall polysaccharide biosynthesis. Its function is as follows. L,D-endopeptidase that cleaves meso-diaminopimelic acid (mDAP)-mDAP cross-links in peptidoglycan. It works in conjunction with other elongation-specific D,D-endopeptidases to make space for efficient incorporation of nascent peptidoglycan strands into the sacculus and thus enable cell wall expansion. This chain is Peptidoglycan L,D-endopeptidase MepK, found in Escherichia coli O157:H7.